Reading from the N-terminus, the 71-residue chain is Large ribosomal subunit protein eL38 (71 aa).

It belongs to the eukaryotic ribosomal protein eL38 family.

This Ixodes scapularis (Black-legged tick) protein is Large ribosomal subunit protein eL38 (RpL38).